Consider the following 105-residue polypeptide: NADH-quinone oxidoreductase subunit K (105 aa).

3 helical membrane-spanning segments follow: residues 9-29 (PNYYLVLAAVLFTIGAAGVLV), 34-54 (IVLFMCVELMLNAANLTLVTF), and 65-85 (IMAFFVMVVAAAEVVVGLAII).

This sequence belongs to the complex I subunit 4L family. In terms of assembly, NDH-1 is composed of 14 different subunits. Subunits NuoA, H, J, K, L, M, N constitute the membrane sector of the complex.

Its subcellular location is the cell membrane. The catalysed reaction is a quinone + NADH + 5 H(+)(in) = a quinol + NAD(+) + 4 H(+)(out). NDH-1 shuttles electrons from NADH, via FMN and iron-sulfur (Fe-S) centers, to quinones in the respiratory chain. The immediate electron acceptor for the enzyme in this species is believed to be a menaquinone. Couples the redox reaction to proton translocation (for every two electrons transferred, four hydrogen ions are translocated across the cytoplasmic membrane), and thus conserves the redox energy in a proton gradient. This is NADH-quinone oxidoreductase subunit K from Salinispora tropica (strain ATCC BAA-916 / DSM 44818 / JCM 13857 / NBRC 105044 / CNB-440).